We begin with the raw amino-acid sequence, 266 residues long: Phosphatidylglycerol--prolipoprotein diacylglyceryl transferase (266 aa).

Helical transmembrane passes span 19-39, 61-81, 91-111, 125-145, 176-196, 204-224, and 237-257; these read IWGP…FAFA, LMFW…TLFY, LYLF…LGVI, FLQV…FGRI, PSQL…ILWF, GAVS…VEFF, and GMSM…ILMV. Arg144 is a binding site for a 1,2-diacyl-sn-glycero-3-phospho-(1'-sn-glycerol).

The protein belongs to the Lgt family.

The protein resides in the cell inner membrane. It carries out the reaction L-cysteinyl-[prolipoprotein] + a 1,2-diacyl-sn-glycero-3-phospho-(1'-sn-glycerol) = an S-1,2-diacyl-sn-glyceryl-L-cysteinyl-[prolipoprotein] + sn-glycerol 1-phosphate + H(+). The protein operates within protein modification; lipoprotein biosynthesis (diacylglyceryl transfer). Catalyzes the transfer of the diacylglyceryl group from phosphatidylglycerol to the sulfhydryl group of the N-terminal cysteine of a prolipoprotein, the first step in the formation of mature lipoproteins. This chain is Phosphatidylglycerol--prolipoprotein diacylglyceryl transferase, found in Idiomarina loihiensis (strain ATCC BAA-735 / DSM 15497 / L2-TR).